Reading from the N-terminus, the 826-residue chain is MAHTDTDDLVGLLDADDQNLDIPATLPMLPVRDVVVFTHMIIPLFVGRDKSVRAVDAAMAKDRFLFLATQMDGAVENPESDQIFKHGTAARILRVLKLPDGRVKVLVQGLAKAKIVRYTKKSDMFRVRIELLHEEDLGDLDMETEALMRNVKESCEKILGLRGELTPDVTMVLDGIDHPGRLADLVASNLNLKIEEAQSIFETIDPVQRLLAVNGFVSREVELSAMQARIQSSVRDEISKSQKDYFLREQMRAINRELGEMDEKTQEIKEYQDKIRKAKMPKEAKEEAERQLKRLEQMHPEAGEAPTVRTYLDWLVEVPWKKATKDTLDIKKAKEILEEDHYGLEKVKDRILEYLAVRKLNPKMKGPILCFVGPPGVGKTSLGKSIARAMGRKFYRLSLGGIRDEAEIRGHRRTYIGALPGRIIQGLKHCKSNNPVFMMDEIDKIGADFRGDPSSALLEALDPEQNFAFSDHYLNVPFDLSSVMFITTANMTDTIPSALLDRMEVINLAGYTENEKVLIAQQYLVPRQVKENGLKPEDITISGNALLKMATEYTSESGLRNLEREIGTLCRKVSRKIAEGKKGPYQITASSLVKYLGLEKFLPEMDQEEPQIGLATGLAWTHWGGEALYIETTLMRGKGELVLTGQLGEVMQESARAALSYARTNEDELEIDPDLFDNFDIHIHVPAGAIPKDGPSAGIAMTTALVSALTERPVANDIAMTGEVTIRGRVLPIGGLREKSLGALRAGIKTIIIPEKNKKELSEVPQQVRRKLKYITVSHVNEVLEKALLPAEKKKAPPKKKPPKKAAKPKAKKTQPKAKTTEAADK.

The Lon N-terminal domain maps to 26–221 (LPMLPVRDVV…AVNGFVSREV (196 aa)). ATP is bound at residue 373–380 (GPPGVGKT). A Lon proteolytic domain is found at 609-790 (EPQIGLATGL…NEVLEKALLP (182 aa)). Catalysis depends on residues Ser696 and Lys739. The interval 788–826 (LLPAEKKKAPPKKKPPKKAAKPKAKKTQPKAKTTEAADK) is disordered. Residues 796 to 816 (APPKKKPPKKAAKPKAKKTQP) are compositionally biased toward basic residues.

The protein belongs to the peptidase S16 family. In terms of assembly, homohexamer. Organized in a ring with a central cavity.

The protein resides in the cytoplasm. It carries out the reaction Hydrolysis of proteins in presence of ATP.. ATP-dependent serine protease that mediates the selective degradation of mutant and abnormal proteins as well as certain short-lived regulatory proteins. Required for cellular homeostasis and for survival from DNA damage and developmental changes induced by stress. Degrades polypeptides processively to yield small peptide fragments that are 5 to 10 amino acids long. Binds to DNA in a double-stranded, site-specific manner. The protein is Lon protease of Desulfatibacillum aliphaticivorans.